Reading from the N-terminus, the 496-residue chain is Cytochrome P450 71D179 (496 aa).

The helical; Signal-anchor for type II membrane protein transmembrane segment at 1–21 (MDISISWVVIIVSVLSYLILM) threads the bilayer. Residue Cys435 participates in heme binding.

This sequence belongs to the cytochrome P450 family. Requires heme as cofactor.

Its subcellular location is the membrane. It participates in secondary metabolite biosynthesis; terpenoid biosynthesis. Its function is as follows. Involved in the biosynthesis of phenolic monoterpenes natural products thymol and carvacrol which have a broad range of biological activities acting as antimicrobial compounds, insecticides, antioxidants and pharmaceutical agents. Catalyzes probably the C3-hydroxylation of gamma-terpinene to produce thymol. The chain is Cytochrome P450 71D179 from Thymus vulgaris (Thyme).